The following is a 263-amino-acid chain: Hydroxyacylglutathione hydrolase (263 aa).

Zn(2+)-binding residues include His55, His57, Asp59, His60, His117, Asp134, and His172.

Belongs to the metallo-beta-lactamase superfamily. Glyoxalase II family. Monomer. The cofactor is Zn(2+).

It carries out the reaction an S-(2-hydroxyacyl)glutathione + H2O = a 2-hydroxy carboxylate + glutathione + H(+). The protein operates within secondary metabolite metabolism; methylglyoxal degradation; (R)-lactate from methylglyoxal: step 2/2. Functionally, thiolesterase that catalyzes the hydrolysis of S-D-lactoyl-glutathione to form glutathione and D-lactic acid. The chain is Hydroxyacylglutathione hydrolase from Shewanella baltica (strain OS185).